The sequence spans 180 residues: MALISSAAVTTVNRASSAQANLVAPFTGLKSSAGFPVTKKTNNDITSIASNGGRVNCMQVWPPVGKKKFETLSYLPPLTEEQLAKEVEYLIRKGWIPCLEFELEKGFVYRENHRSPGYYDGRYWTMWRLPLFGATDSSQVLKELADCKAEYPDSFIRIIGFDNVRQVQCISFIAHTPKNY.

Residues 1–56 constitute a chloroplast transit peptide; it reads MALISSAAVTTVNRASSAQANLVAPFTGLKSSAGFPVTKKTNNDITSIASNGGRVN.

This sequence belongs to the RuBisCO small chain family. Heterohexadecamer of 8 large and 8 small subunits.

The protein resides in the plastid. Its subcellular location is the chloroplast. Functionally, ruBisCO catalyzes two reactions: the carboxylation of D-ribulose 1,5-bisphosphate, the primary event in carbon dioxide fixation, as well as the oxidative fragmentation of the pentose substrate. Both reactions occur simultaneously and in competition at the same active site. Although the small subunit is not catalytic it is essential for maximal activity. This is Ribulose bisphosphate carboxylase small subunit, chloroplastic from Medicago sativa (Alfalfa).